Reading from the N-terminus, the 1164-residue chain is MTMTTNAERKFINLRKRLDQLGYRQPLAIESLPLVEKLFSDLIHTTESLRNAKLAAGKTEKESRNVDAILEPYKTENARLVKENNEMHLGLLKLREEKDRISRELKAYIRKLDHETSDLKFLNNQYVQKVRSLEKDSNGKTERILQLQEKNMQAVVQTPGGKKRSIPFRRQRMQTDELLPSSGGYVPPAVAQPDDPYIADLLQVADDRIQELQKEVAQLKLDLERAQGGIKHLNKQVEERDKEIERLNRALDGGRPHDVISLEAQNISNEKLIAHLNLQIEYLQETNRSLEQRVDSLQQKKKTVSSEVADLSARNQELCQELTQIDQLAQQLEKDKEMVLETADMELQEAKKAIQRQQRELEGQEEVISTLRRDMADGDHVKDQLRNQLLDLQDQNNKMEGLIHFLEEDKKRLQDKIEAMMQEDKEMVLELERMRARHGMCGKDHSPSRLDAFVKSLEEERNYYREEVERYRLVRGRTDRSPTPVGRGRSPRGRGSWHGKRDGDAELSRVVKERDELQSVLLGFEKHMEDIQTRVKLLTAERDQLSSQCQQAQEELRRVQRELESSELQRRIRDDREQTEAELQRVTAERDALRDRLKVAHSTALTDREQEEFRFLDLENTIEKLEREKADLRAQVTVLKESRVVVEKELKAQSAVLLQNVEEATQQRVESSALRLLQEQMEQSLSDVQHRLSVKTNELQAAHQQIDKLEEKIADLSRHGSSQKDEVVILQNTIASLDREKDTLQDAVDQKTESVVLLQQEVHRKEETLLEVRLTVTDLENSLNQLQAVLSSREREIASLRRQLDQSQEELFSVSRDREVALRENRRLQDDLATMTRENQAVHAEMQEALNERDELKLRVHSYISEVARIESLMAAKEQENRDMLERFRSIHTESEDKELKLQQSEGLNNSIRLELLSSDTERRHLRERVSLQDREIQEHLNALQAYEAQVSSLARAMSRLEEEVQAARAEKASVLADLASVRELCVKLDSSKELTVRQLTSKSMELERVTGELEDVRSEMELLKKQLGSERLTVRNLETLLSTNRQKEFQTHISASEKESELKVLKDRLALADSKTAGHAREVSQLRGKVSQLQTEMDVLKRQLTTERFERERAVQEMRRQGLSFSSLRSSSPLSTSLSPRPASPERSILRTPERSTDKTQDK.

Residues 13 to 66 (NLRKRLDQLGYRQPLAIESLPLVEKLFSDLIHTTESLRNAKLAAGKTEKESRNV) form a homodimerization region. 5 coiled-coil regions span residues 77 to 153 (NARL…KNMQ), 202 to 423 (LQVA…MMQE), 454 to 649 (VKSL…VEKE), 673 to 1041 (ALRL…LETL), and 1084 to 1118 (VSQL…AVQE). The segment at 475 to 505 (RGRTDRSPTPVGRGRSPRGRGSWHGKRDGDA) is disordered. Residues 489 to 498 (RSPRGRGSWH) show a composition bias toward basic residues. A disordered region spans residues 1121–1164 (RQGLSFSSLRSSSPLSTSLSPRPASPERSILRTPERSTDKTQDK). A compositionally biased stretch (low complexity) spans 1122 to 1142 (QGLSFSSLRSSSPLSTSLSPR). Basic and acidic residues predominate over residues 1149–1164 (SILRTPERSTDKTQDK).

Belongs to the CEP135/TSGA10 family. Homodimer.

Its subcellular location is the cytoplasm. It localises to the cytoskeleton. The protein localises to the microtubule organizing center. It is found in the centrosome. The protein resides in the centriole. In terms of biological role, centrosomal microtubule-binding protein involved in centriole biogenesis. Acts as a scaffolding protein during early centriole biogenesis. Required for the targeting of centriole satellite proteins to centrosomes. Also required for centriole-centriole cohesion during interphase by acting as a platform protein for cep250 at the centriole. This chain is Centrosomal protein of 135 kDa (cep135), found in Danio rerio (Zebrafish).